The sequence spans 355 residues: Heat-inducible transcription repressor HrcA (355 aa).

This sequence belongs to the HrcA family.

In terms of biological role, negative regulator of class I heat shock genes (grpE-dnaK-dnaJ and groELS operons). Prevents heat-shock induction of these operons. In Nitratidesulfovibrio vulgaris (strain ATCC 29579 / DSM 644 / CCUG 34227 / NCIMB 8303 / VKM B-1760 / Hildenborough) (Desulfovibrio vulgaris), this protein is Heat-inducible transcription repressor HrcA.